A 136-amino-acid polypeptide reads, in one-letter code: Non-structural protein 1 (136 aa).

Belongs to the pneumovirus non-structural protein 1 family. As to quaternary structure, monomer. Homomultimer. Heteromultimer with NS2. Interacts with the matrix protein M. Interacts with host ELOC and CUL2; this interaction allows NS1 to form an active E3 ligase with ELOC and CUL2. Interacts with host IRF3; this interaction leads to the disrupted association of IRF3 with CREBBP and thus reduced binding of IRF3 to the IFN-beta promoter. Interacts with host MAVS; this interaction prevents MAVS binding to RIGI and inhibits signaling pathway leading to interferon production. Interacts with host TRIM25 (via SPRY domain); this interaction suppresses RIGI ubiquitination and results in decreased interaction between RIGI and MAVS.

The protein resides in the host cytoplasm. The protein localises to the host mitochondrion. It localises to the host nucleus. Functionally, plays a major role in antagonizing the type I IFN-mediated antiviral response by degrading or inhibiting multiple cellular factors required for either IFN induction or response pathways. Acts cooperatively with NS2 to repress activation and nuclear translocation of host IFN-regulatory factor IRF3. Also disrupts the association of IRF3 with CREBBP. Interacts with host mitochondrial-associated membrane (MAM) MAVS and prevents the interaction with RIGI. Interacts with TRIM25 to suppress TRIM25-mediated RIGI ubiquitination and thereby RIGI-MAVS interaction. Together with NS2, participates in the proteasomal degradation of host STAT2, IRF3, IRF7, TBK1 and RIGI through a NS-degradasome involving CUL2 and Elongin-C. The degradasome requires an intact mitochondrial MAVS. Decreases the levels of host TRAF3 and IKBKE/IKK-epsilon. As functions other than disruptions of the type I IFN-mediated antiviral signaling pathways, induces host SOCS1 and SOCS3 expression. Suppresses premature apoptosis by an NF-kappa-B-dependent, interferon-independent mechanism and thus facilitates virus growth. Additionally, NS1 may serve some inhibitory role in viral transcription and RNA replication. Suppresses proliferation and activation of host CD103+ CD8+ cytotoxic T-lymphocytes and Th17 helper T-lymphocytes. The chain is Non-structural protein 1 (1C) from Bos taurus (Bovine).